A 208-amino-acid polypeptide reads, in one-letter code: Small ribosomal subunit protein eS8 (208 aa).

The tract at residues 1-23 (MGISRDSAHKRRATGGKRKSLRK) is disordered. Over residues 8–23 (AHKRRATGGKRKSLRK) the composition is skewed to basic residues.

The protein belongs to the eukaryotic ribosomal protein eS8 family. Component of the small ribosomal subunit. Identified in a IGF2BP1-dependent mRNP granule complex containing untranslated mRNAs. Part of the small subunit (SSU) processome, composed of more than 70 proteins and the RNA chaperone small nucleolar RNA (snoRNA) U3.

Its subcellular location is the cytoplasm. It is found in the membrane. The protein resides in the nucleus. The protein localises to the nucleolus. Functionally, component of the small ribosomal subunit. The ribosome is a large ribonucleoprotein complex responsible for the synthesis of proteins in the cell. Part of the small subunit (SSU) processome, first precursor of the small eukaryotic ribosomal subunit. During the assembly of the SSU processome in the nucleolus, many ribosome biogenesis factors, an RNA chaperone and ribosomal proteins associate with the nascent pre-rRNA and work in concert to generate RNA folding, modifications, rearrangements and cleavage as well as targeted degradation of pre-ribosomal RNA by the RNA exosome. The sequence is that of Small ribosomal subunit protein eS8 (RpS8) from Drosophila melanogaster (Fruit fly).